Reading from the N-terminus, the 157-residue chain is Transcription elongation factor GreA (157 aa).

The stretch at 13-75 (RARLEAELEE…EIKSILARAQ (63 aa)) forms a coiled coil.

It belongs to the GreA/GreB family.

Functionally, necessary for efficient RNA polymerase transcription elongation past template-encoded arresting sites. The arresting sites in DNA have the property of trapping a certain fraction of elongating RNA polymerases that pass through, resulting in locked ternary complexes. Cleavage of the nascent transcript by cleavage factors such as GreA or GreB allows the resumption of elongation from the new 3'terminus. GreA releases sequences of 2 to 3 nucleotides. The chain is Transcription elongation factor GreA from Roseiflexus castenholzii (strain DSM 13941 / HLO8).